The primary structure comprises 451 residues: Prenyltransferase anuH (451 aa).

Positions 105, 189, 191, 257, 259, and 422 each coordinate dimethylallyl diphosphate.

This sequence belongs to the tryptophan dimethylallyltransferase family.

The catalysed reaction is (8S)-annullatin E + dimethylallyl diphosphate = (8S)-annullatin J + diphosphate. Its pathway is secondary metabolite biosynthesis. Its function is as follows. Cytochrome P450 monooxygenase; part of the gene cluster that mediates the biosynthesis of annullatin D, an alkylated aromatic polyketide with a fused dihydrobenzofuran lactone ring system that exhibits potent agonistic activities toward the cannabinoid receptors. Within the pathway, anuH uses dimethylallyl diphosphate (DMAPP) to prenylate (8S)-annullatin E to produce (8S)-annullatin J. Geranyl and farnesyl diphosphate are not consumed by anuH for prenylation. 2-hydroxymethyl-3-pentylphenol, without the hydroxyl group at the side chain, is also accepted by anuH, but only with low conversion yield. The annullatin backbone 2-hydroxymethyl-3-pentylphenol is assembled from one acetyl-CoA starter unit and 5 malonyl-CoA elongation units by cooperation of the highly reducing polyketide synthase anuA, the short-chain dehydrogenase anuB and the oxidoreductase anuC, before being hydroxylated at the C-5 alkyl chain by the cytochrome P450 monooxygenase anuE to form (8S)-annullatin E. The prenyltransferase anuH subsequently installs one isoprenyl group at the benzene ring to form (8S)-annullatin J. Enzymatic or nonenzymatic dihydro-benzofuran ring formation between the prenyl and the phenolic hydroxyl groups in (8S)-annullatin J results in two diastereomers (2S,9S)-annullatin H and compound 12. The intermediate (2S,9S)-annullatin H is then converted to (2S,9S)-annullatin D by the FAD-linked oxidoreductase anuG-catalyzed five-member lactone ring formation. The isomer 12 acts as a substrate for the short-chain dehydrogenase anuF and is oxidized to (2R)-annullatin F, which is subsequently acetylated by an acetyltransferase leading to (2R)-annullatin G formation. The remaining enzymes identified within the cluster, anuD, anuI and anuJ, seem not to be involved in annullatin biosynthesis. This Penicillium roqueforti (strain FM164) protein is Prenyltransferase anuH.